The primary structure comprises 472 residues: Phosphoglucosamine mutase (472 aa).

Catalysis depends on Ser-123, which acts as the Phosphoserine intermediate. Mg(2+) is bound by residues Ser-123, Asp-262, Asp-264, and Asp-266. Ser-123 carries the post-translational modification Phosphoserine.

The protein belongs to the phosphohexose mutase family. Mg(2+) is required as a cofactor. Post-translationally, activated by phosphorylation.

The catalysed reaction is alpha-D-glucosamine 1-phosphate = D-glucosamine 6-phosphate. Catalyzes the conversion of glucosamine-6-phosphate to glucosamine-1-phosphate. In Synechococcus elongatus (strain ATCC 33912 / PCC 7942 / FACHB-805) (Anacystis nidulans R2), this protein is Phosphoglucosamine mutase.